We begin with the raw amino-acid sequence, 113 residues long: Putative pterin-4-alpha-carbinolamine dehydratase (113 aa).

It belongs to the pterin-4-alpha-carbinolamine dehydratase family.

The enzyme catalyses (4aS,6R)-4a-hydroxy-L-erythro-5,6,7,8-tetrahydrobiopterin = (6R)-L-erythro-6,7-dihydrobiopterin + H2O. The chain is Putative pterin-4-alpha-carbinolamine dehydratase from Idiomarina loihiensis (strain ATCC BAA-735 / DSM 15497 / L2-TR).